Here is a 91-residue protein sequence, read N- to C-terminus: Small ribosomal subunit protein uS19 (91 aa).

It belongs to the universal ribosomal protein uS19 family.

Functionally, protein S19 forms a complex with S13 that binds strongly to the 16S ribosomal RNA. This is Small ribosomal subunit protein uS19 from Psychrobacter arcticus (strain DSM 17307 / VKM B-2377 / 273-4).